A 237-amino-acid polypeptide reads, in one-letter code: 1-(5-phosphoribosyl)-5-[(5-phosphoribosylamino)methylideneamino] imidazole-4-carboxamide isomerase (237 aa).

The active-site Proton acceptor is the Asp-8. The Proton donor role is filled by Asp-127.

The protein belongs to the HisA/HisF family.

The protein resides in the cytoplasm. The catalysed reaction is 1-(5-phospho-beta-D-ribosyl)-5-[(5-phospho-beta-D-ribosylamino)methylideneamino]imidazole-4-carboxamide = 5-[(5-phospho-1-deoxy-D-ribulos-1-ylimino)methylamino]-1-(5-phospho-beta-D-ribosyl)imidazole-4-carboxamide. It participates in amino-acid biosynthesis; L-histidine biosynthesis; L-histidine from 5-phospho-alpha-D-ribose 1-diphosphate: step 4/9. This is 1-(5-phosphoribosyl)-5-[(5-phosphoribosylamino)methylideneamino] imidazole-4-carboxamide isomerase from Sulfurovum sp. (strain NBC37-1).